Consider the following 313-residue polypeptide: 4-hydroxy-3-methylbut-2-enyl diphosphate reductase (313 aa).

Cys-20 lines the [4Fe-4S] cluster pocket. Residues His-49 and His-82 each coordinate (2E)-4-hydroxy-3-methylbut-2-enyl diphosphate. Residues His-49 and His-82 each coordinate dimethylallyl diphosphate. Positions 49 and 82 each coordinate isopentenyl diphosphate. Residue Cys-104 coordinates [4Fe-4S] cluster. Residue His-132 coordinates (2E)-4-hydroxy-3-methylbut-2-enyl diphosphate. His-132 lines the dimethylallyl diphosphate pocket. Position 132 (His-132) interacts with isopentenyl diphosphate. Residue Glu-134 is the Proton donor of the active site. A (2E)-4-hydroxy-3-methylbut-2-enyl diphosphate-binding site is contributed by Thr-172. Residue Cys-201 coordinates [4Fe-4S] cluster. Residues Ser-229, Ser-230, Asn-231, and Ser-273 each coordinate (2E)-4-hydroxy-3-methylbut-2-enyl diphosphate. Ser-229, Ser-230, Asn-231, and Ser-273 together coordinate dimethylallyl diphosphate. Residues Ser-229, Ser-230, Asn-231, and Ser-273 each coordinate isopentenyl diphosphate.

This sequence belongs to the IspH family. [4Fe-4S] cluster is required as a cofactor.

It catalyses the reaction isopentenyl diphosphate + 2 oxidized [2Fe-2S]-[ferredoxin] + H2O = (2E)-4-hydroxy-3-methylbut-2-enyl diphosphate + 2 reduced [2Fe-2S]-[ferredoxin] + 2 H(+). It carries out the reaction dimethylallyl diphosphate + 2 oxidized [2Fe-2S]-[ferredoxin] + H2O = (2E)-4-hydroxy-3-methylbut-2-enyl diphosphate + 2 reduced [2Fe-2S]-[ferredoxin] + 2 H(+). It functions in the pathway isoprenoid biosynthesis; dimethylallyl diphosphate biosynthesis; dimethylallyl diphosphate from (2E)-4-hydroxy-3-methylbutenyl diphosphate: step 1/1. The protein operates within isoprenoid biosynthesis; isopentenyl diphosphate biosynthesis via DXP pathway; isopentenyl diphosphate from 1-deoxy-D-xylulose 5-phosphate: step 6/6. Functionally, catalyzes the conversion of 1-hydroxy-2-methyl-2-(E)-butenyl 4-diphosphate (HMBPP) into a mixture of isopentenyl diphosphate (IPP) and dimethylallyl diphosphate (DMAPP). Acts in the terminal step of the DOXP/MEP pathway for isoprenoid precursor biosynthesis. In Desulfotalea psychrophila (strain LSv54 / DSM 12343), this protein is 4-hydroxy-3-methylbut-2-enyl diphosphate reductase.